Consider the following 528-residue polypeptide: Na(+)/H(+) antiporter NhaB (528 aa).

Transmembrane regions (helical) follow at residues isoleucine 25–leucine 47, proline 66–leucine 86, leucine 97–phenylalanine 117, valine 130–isoleucine 164, isoleucine 241–valine 261, alanine 304–isoleucine 324, alanine 351–leucine 371, leucine 390–glycine 410, alanine 448–isoleucine 468, and valine 476–leucine 496.

Belongs to the NhaB Na(+)/H(+) (TC 2.A.34) antiporter family.

The protein localises to the cell inner membrane. It catalyses the reaction 2 Na(+)(in) + 3 H(+)(out) = 2 Na(+)(out) + 3 H(+)(in). Its function is as follows. Na(+)/H(+) antiporter that extrudes sodium in exchange for external protons. This is Na(+)/H(+) antiporter NhaB from Shewanella halifaxensis (strain HAW-EB4).